We begin with the raw amino-acid sequence, 480 residues long: Cysteine--tRNA ligase (480 aa).

A Zn(2+)-binding site is contributed by C27. Positions 29–39 (PTVYNYAHIGN) match the 'HIGH' region motif. Zn(2+) is bound by residues C221, H246, and E250. The 'KMSKS' region motif lies at 278–282 (KMSKS). K281 contacts ATP.

It belongs to the class-I aminoacyl-tRNA synthetase family. As to quaternary structure, monomer. Requires Zn(2+) as cofactor.

The protein resides in the cytoplasm. It carries out the reaction tRNA(Cys) + L-cysteine + ATP = L-cysteinyl-tRNA(Cys) + AMP + diphosphate. The polypeptide is Cysteine--tRNA ligase (Borrelia garinii subsp. bavariensis (strain ATCC BAA-2496 / DSM 23469 / PBi) (Borreliella bavariensis)).